Consider the following 546-residue polypeptide: MIFLLFVVFPFVYAQLLPELLAGFQNGRFRGGPDGFNRGPGGFHRGPDGFGGDPRGGVDLGHLIGNIAANVGQEMGLNDADVIGDLRGISRGPRPSSMEWGRRARHFCRRYPGHPKCQRGQLPQFTDVPTIINTIIYNAGDLLPRVPTLNIHDPLAGLNSELVGFIKSLQSQFGQLSSQQRNEIHDSCRSFKCDQQSPQNTQAKQELLTKMLAFDQAVGGKAAPAHDKVNLRFDRTQQVKQALLKRANLSHIIVPADNGVFDRDVLLTEHQANFLLNELGEAGRGADVGAGGGGGGRVPRSGVFFQESAVQKWDIWKPIQYTLDDSLEESDKKDIRDALHEISINTCILFRYNATPKGYHLNYMKVDSTTFCGLSYVGRTDPANPIYLSFQCGDNRGVAMHETMHALGVSHQHLRLDRDKYIKIDWSNIDPQHYDTFAISDAKLYTSYGTKYAYDSIMHYNAYLGAKDPNKPTMIPLVNPQENTPKLGQRAKLTRGDIRLLKKMYCRPGCDDQNVHCGTWALHGYCKMKEQMKWMNENCKASCDKC.

The N-terminal stretch at 1 to 14 (MIFLLFVVFPFVYA) is a signal peptide. A propeptide spanning residues 15–300 (QLLPELLAGF…GGGGGGRVPR (286 aa)) is cleaved from the precursor. An N-linked (GlcNAc...) asparagine glycan is attached at N248. One can recognise a Peptidase M12A domain in the interval 308-507 (SAVQKWDIWK…IRLLKKMYCR (200 aa)). Cystine bridges form between C347/C506, C372/C392, C510/C546, C517/C539, and C526/C543. H401 is a binding site for Zn(2+). E402 is a catalytic residue. Positions 405 and 411 each coordinate Zn(2+). The ShKT domain occupies 510–546 (CDDQNVHCGTWALHGYCKMKEQMKWMNENCKASCDKC).

Zn(2+) serves as cofactor. As to expression, expressed in hypodermis, uterus and spermatheca.

It localises to the secreted. Functionally, metalloprotease. The chain is Zinc metalloproteinase nas-9 (nas-9) from Caenorhabditis elegans.